The primary structure comprises 172 residues: Lectin (172 aa).

The N-terminal stretch at 1 to 20 is a signal peptide; the sequence is MVWCLADLRAYVLVLLVISG. The 137-residue stretch at 36 to 172 folds into the C-type lectin domain; the sequence is DCTPGWDCHF…ICKYTTPCRY (137 aa). Disulfide bonds link cysteine 65–cysteine 164 and cysteine 140–cysteine 156. The N-linked (GlcNAc...) asparagine glycan is linked to asparagine 93.

In terms of assembly, heterodimer. In terms of tissue distribution, anterior part of oviduct.

The protein localises to the secreted. In terms of biological role, may be involved in protection of eggs and embryos against microorganisms. Calcium-dependent lectin with specificity to D-glucose and D-glucosamine. Can agglutinate microorganisms in vivo. This chain is Lectin (LEC), found in Pleurodeles waltl (Iberian ribbed newt).